We begin with the raw amino-acid sequence, 77 residues long: MLALTRKAGERIVIGDNIVVTVVSIKGDSIRLTIDAPKEVKIYRGEIYDAIAAENKEAAVPMDLTELTALKEFHIRK.

The protein belongs to the CsrA/RsmA family. As to quaternary structure, homodimer; the beta-strands of each monomer intercalate to form a hydrophobic core, while the alpha-helices form wings that extend away from the core.

The protein localises to the cytoplasm. Functionally, a translational regulator that binds mRNA to regulate translation initiation and/or mRNA stability. Usually binds in the 5'-UTR at or near the Shine-Dalgarno sequence preventing ribosome-binding, thus repressing translation. Its main target seems to be the major flagellin gene, while its function is anatagonized by FliW. The protein is Translational regulator CsrA of Desulfitobacterium hafniense (strain Y51).